Reading from the N-terminus, the 52-residue chain is Large ribosomal subunit protein bL33 (52 aa).

Belongs to the bacterial ribosomal protein bL33 family.

The polypeptide is Large ribosomal subunit protein bL33 (Helicobacter pylori (strain HPAG1)).